The sequence spans 190 residues: HTH-type transcriptional repressor CutR (190 aa).

In terms of domain architecture, HTH deoR-type spans Pro-3–Leu-58. The H-T-H motif DNA-binding region spans Leu-20–Asp-39.

Its subcellular location is the cytoplasm. Its function is as follows. May act as a negative transcriptional regulator of cutJ/ycnJ in the presence of copper. May use copper as a corepressor. The polypeptide is HTH-type transcriptional repressor CutR (Bacillus subtilis (strain 168)).